We begin with the raw amino-acid sequence, 141 residues long: Large ribosomal subunit protein uL14 (141 aa).

It belongs to the universal ribosomal protein uL14 family. As to quaternary structure, part of the 50S ribosomal subunit. Forms a cluster with proteins L3 and L24e, part of which may contact the 16S rRNA in 2 intersubunit bridges.

Its function is as follows. Binds to 23S rRNA. Forms part of two intersubunit bridges in the 70S ribosome. The protein is Large ribosomal subunit protein uL14 of Pyrococcus abyssi (strain GE5 / Orsay).